The following is a 91-amino-acid chain: ITCGQVSSALAPCIPYVRGGGAVPPACCNGIRNVNNLARTTPDRQAACNCLKQLSASVPGVNPNNAAALPGKCGVHIPYKISASTNCATVK.

Intrachain disulfides connect Cys3–Cys50, Cys13–Cys27, Cys28–Cys73, and Cys48–Cys87.

The protein belongs to the plant LTP family.

In terms of biological role, plant non-specific lipid-transfer proteins transfer phospholipids as well as galactolipids across membranes. May play a role in wax or cutin deposition in the cell walls of expanding epidermal cells and certain secretory tissues. This is Non-specific lipid-transfer protein 1 from Prunus persica (Peach).